Consider the following 227-residue polypeptide: Ornithine decarboxylase antizyme 1 (227 aa).

The interval 20-50 (EGDKPSATVHATRTMPLLSLHSRGGRSSESS) is disordered. The span at 36-50 (LLSLHSRGGRSSESS) shows a compositional bias: low complexity.

Belongs to the ODC antizyme family. In terms of assembly, interacts with ODC1 and thereby sterically blocks ODC homodimerization. Forms a ternary complex with PSMB4 and OAZ1 before PSMB4 is incorporated into the 20S proteasome. Interacts with AZIN2; this interaction disrupts the interaction between the antizyme and ODC1. Interacts with FAM171A1.

Its function is as follows. Ornithine decarboxylase (ODC) antizyme protein that negatively regulates ODC activity and intracellular polyamine biosynthesis and uptake in response to increased intracellular polyamine levels. Binds to ODC monomers, inhibiting the assembly of the functional ODC homodimer, and targets the monomers for ubiquitin-independent proteolytic destruction by the 26S proteasome. Triggers ODC degradation by inducing the exposure of a cryptic proteasome-interacting surface of ODC. Stabilizes AZIN2 by interfering with its ubiquitination. Also inhibits cellular uptake of polyamines by inactivating the polyamine uptake transporter. SMAD1/OAZ1/PSMB4 complex mediates the degradation of the CREBBP/EP300 repressor SNIP1. Involved in the translocation of AZIN2 from ER-Golgi intermediate compartment (ERGIC) to the cytosol. This is Ornithine decarboxylase antizyme 1 (OAZ1) from Bos taurus (Bovine).